The sequence spans 200 residues: Potassium-transporting ATPase KdpC subunit (200 aa).

Residues 9–31 traverse the membrane as a helical segment; that stretch reads LVMLVALTALTGLVYPLAMTGVA. Positions 68 to 97 are disordered; sequence GRPSATTAPDPQDSSKTVPSPYNAANSMGA. Over residues 71–96 the composition is skewed to polar residues; that stretch reads SATTAPDPQDSSKTVPSPYNAANSMG.

Belongs to the KdpC family. The system is composed of three essential subunits: KdpA, KdpB and KdpC.

It localises to the cell inner membrane. Functionally, part of the high-affinity ATP-driven potassium transport (or Kdp) system, which catalyzes the hydrolysis of ATP coupled with the electrogenic transport of potassium into the cytoplasm. This subunit acts as a catalytic chaperone that increases the ATP-binding affinity of the ATP-hydrolyzing subunit KdpB by the formation of a transient KdpB/KdpC/ATP ternary complex. In Rhodopseudomonas palustris (strain BisA53), this protein is Potassium-transporting ATPase KdpC subunit.